The chain runs to 934 residues: Bifunctional uridylyltransferase/uridylyl-removing enzyme (934 aa).

Residues 1-379 are uridylyltransferase; sequence MSAHDLKLEE…TFSRRKRKLS (379 aa). Residues 380–736 are uridylyl-removing; it reads DDGAFISENH…AKPHAFEAVT (357 aa). Residues 496–613 form the HD domain; the sequence is VDEHLLRCIA…IDFADTVQTM (118 aa). 2 ACT domains span residues 737–818 and 848–931; these read EITV…DMLA and VIEV…RSPQ.

The protein belongs to the GlnD family. Mg(2+) is required as a cofactor.

It catalyses the reaction [protein-PII]-L-tyrosine + UTP = [protein-PII]-uridylyl-L-tyrosine + diphosphate. The enzyme catalyses [protein-PII]-uridylyl-L-tyrosine + H2O = [protein-PII]-L-tyrosine + UMP + H(+). Its activity is regulated as follows. Uridylyltransferase (UTase) activity is inhibited by glutamine, while glutamine activates uridylyl-removing (UR) activity. Functionally, modifies, by uridylylation and deuridylylation, the PII regulatory proteins (GlnB and homologs), in response to the nitrogen status of the cell that GlnD senses through the glutamine level. Under low glutamine levels, catalyzes the conversion of the PII proteins and UTP to PII-UMP and PPi, while under higher glutamine levels, GlnD hydrolyzes PII-UMP to PII and UMP (deuridylylation). Thus, controls uridylylation state and activity of the PII proteins, and plays an important role in the regulation of nitrogen assimilation and metabolism. The chain is Bifunctional uridylyltransferase/uridylyl-removing enzyme from Brucella melitensis biotype 2 (strain ATCC 23457).